The primary structure comprises 507 residues: uncharacterized protein (507 aa).

A run of 12 helical transmembrane segments spans residues 46 to 66 (WIVLLAVALLNNTNTMSWIGY), 83 to 103 (AWLSMVYMMCTIPVGMFAMWA), 112 to 132 (AVLIAGWANGIGAVIRVISSL), 141 to 161 (FPICMTGQGIAAIAYPFIMFL), 181 to 201 (IGVMSNPLGVLMANLISPAIV), 207 to 227 (VIWLNIFTCVPSLIAMLIATF), 263 to 283 (IILLIVMGGGIGMFNCLYTVM), 299 to 319 (VCAALMIVGGVFGAAASSIFV), 328 to 348 (TLKIALGAAVIFGLIFLQLTL), 354 to 374 (VILGVTCLLFGVLGLATYPIG), 389 to 409 (TSTGLIVLSGQIQSVIYVFIM), and 442 to 462 (MSIMIFSLLATLLVLTLVVLF). Residues 477 to 493 (ATADKAKELSNQNKDRI) show a composition bias toward basic and acidic residues. Residues 477–507 (ATADKAKELSNQNKDRITLQAESAVEPLQKK) form a disordered region.

It localises to the membrane. This is an uncharacterized protein from Caenorhabditis elegans.